Consider the following 160-residue polypeptide: Keratin-associated protein 13-4 (160 aa).

Tandem repeats lie at residues 41–50 (CQLRSSLYRD), 51–60 (CQKTCWEPAS), 61–70 (CQKSCYRPRT), and 77–86 (CQTTCSGSLG). Positions 41–86 (CQLRSSLYRDCQKTCWEPASCQKSCYRPRTSILCCPCQTTCSGSLG) are 4 X 10 AA approximate repeats.

Belongs to the PMG family. In terms of assembly, interacts with hair keratins.

Functionally, in the hair cortex, hair keratin intermediate filaments are embedded in an interfilamentous matrix, consisting of hair keratin-associated proteins (KRTAP), which are essential for the formation of a rigid and resistant hair shaft through their extensive disulfide bond cross-linking with abundant cysteine residues of hair keratins. The matrix proteins include the high-sulfur and high-glycine-tyrosine keratins. In Homo sapiens (Human), this protein is Keratin-associated protein 13-4 (KRTAP13-4).